The chain runs to 56 residues: Large ribosomal subunit protein bL33 (56 aa).

Belongs to the bacterial ribosomal protein bL33 family.

The chain is Large ribosomal subunit protein bL33 (rpmG) from Rickettsia prowazekii (strain Madrid E).